The primary structure comprises 432 residues: Glutamate-1-semialdehyde 2,1-aminomutase 2 (432 aa).

Position 268 is an N6-(pyridoxal phosphate)lysine (Lys268).

It belongs to the class-III pyridoxal-phosphate-dependent aminotransferase family. HemL subfamily. As to quaternary structure, homodimer. The cofactor is pyridoxal 5'-phosphate.

It localises to the cytoplasm. It carries out the reaction (S)-4-amino-5-oxopentanoate = 5-aminolevulinate. Its pathway is porphyrin-containing compound metabolism; protoporphyrin-IX biosynthesis; 5-aminolevulinate from L-glutamyl-tRNA(Glu): step 2/2. This chain is Glutamate-1-semialdehyde 2,1-aminomutase 2, found in Listeria welshimeri serovar 6b (strain ATCC 35897 / DSM 20650 / CCUG 15529 / CIP 8149 / NCTC 11857 / SLCC 5334 / V8).